Here is a 1486-residue protein sequence, read N- to C-terminus: Rap guanine nucleotide exchange factor 2 (1486 aa).

2 disordered regions span residues histidine 40–leucine 59 and serine 68–leucine 101. Residues valine 83 to isoleucine 94 are compositionally biased toward acidic residues. Alanine 135–valine 252 is an a nucleoside 3',5'-cyclic phosphate binding site. The 114-residue stretch at lysine 267–lysine 380 folds into the N-terminal Ras-GEF domain. The 84-residue stretch at leucine 385 to phenylalanine 468 folds into the PDZ domain. Serine 501 bears the Phosphoserine mark. Residues proline 606 to glutamate 692 enclose the Ras-associating domain. Threonine 644 is subject to Phosphothreonine. The 228-residue stretch at serine 717–leucine 944 folds into the Ras-GEF domain. A phosphoserine mark is found at serine 806, serine 930, serine 933, and serine 1022. The disordered stretch occupies residues proline 1002–glutamine 1049. The span at glutamine 1035 to proline 1044 shows a compositional bias: pro residues. Phosphoserine is present on residues serine 1077, serine 1086, serine 1092, serine 1113, serine 1117, serine 1156, and serine 1173. 4 disordered regions span residues glutamate 1090–isoleucine 1176, proline 1221–histidine 1254, lysine 1303–serine 1357, and glycine 1391–valine 1486. 2 stretches are compositionally biased toward low complexity: residues serine 1105–proline 1122 and serine 1138–serine 1159. 2 stretches are compositionally biased toward polar residues: residues glycine 1244–histidine 1254 and tyrosine 1304–glycine 1328. A compositionally biased stretch (acidic residues) spans alanine 1475–valine 1486.

Belongs to the RAPGEF2 family. In terms of assembly, found in a complex, at least composed of KIDINS220, MAGI2, NTRK1 and RAPGEF2; the complex is mainly formed at late endosomes in a neuronal growth factor (NGF)-dependent manner. Interacts (via C-terminal domain) with NEDD4 (via WW domains); this interaction leads to ubiquitination and degradation via the proteasome pathway in a cAMP-independent manner. Interacts with MAGI1 (via PDZ domain). Interacts with ADRB1 (via C-terminal PDZ motif); the interaction is direct. Interacts (via Ras-associating domain) with RAP1A (via GTP-bound active form). Interacts weakly with HRAS (via GDP- and GTP-bound forms). Interacts (via C-terminal domain) with MAGI2 (via PDZ and WW domains). Interacts with CDH1 and TJP1. Interacts with CTNNB1. In terms of processing, ubiquitinated by NEDD4, leading to proteasomal degradation. Phosphorylation by PLK2 promotes its activity.

The protein localises to the cytoplasm. Its subcellular location is the perinuclear region. It is found in the cell membrane. It localises to the late endosome. The protein resides in the cell junction. Functionally, functions as a guanine nucleotide exchange factor (GEF), which activates Rap and Ras family of small GTPases by exchanging bound GDP for free GTP in a cAMP-dependent manner. Serves as a link between cell surface receptors and Rap/Ras GTPases in intracellular signaling cascades. Also acts as an effector for Rap1 by direct association with Rap1-GTP thereby leading to the amplification of Rap1-mediated signaling. Shows weak activity on HRAS. It is controversial whether RAPGEF2 binds cAMP and cGMP or not. Its binding to ligand-activated beta-1 adrenergic receptor ADRB1 leads to the Ras activation through the G(s)-alpha signaling pathway. Involved in the cAMP-induced Ras and Erk1/2 signaling pathway that leads to sustained inhibition of long term melanogenesis by reducing dendrite extension and melanin synthesis. Also provides inhibitory signals for cell proliferation of melanoma cells and promotes their apoptosis in a cAMP-independent nanner. Regulates cAMP-induced neuritogenesis by mediating the Rap1/B-Raf/ERK signaling through a pathway that is independent on both PKA and RAPGEF3/RAPGEF4. Involved in neuron migration and in the formation of the major forebrain fiber connections forming the corpus callosum, the anterior commissure and the hippocampal commissure during brain development. Involved in neuronal growth factor (NGF)-induced sustained activation of Rap1 at late endosomes and in brain-derived neurotrophic factor (BDNF)-induced axon outgrowth of hippocampal neurons. Plays a role in the regulation of embryonic blood vessel formation and in the establishment of basal junction integrity and endothelial barrier function. May be involved in the regulation of the vascular endothelial growth factor receptor KDR and cadherin CDH5 expression at allantois endothelial cell-cell junctions. Binds to cAMP. The polypeptide is Rap guanine nucleotide exchange factor 2 (RAPGEF2) (Bos taurus (Bovine)).